Consider the following 170-residue polypeptide: Crossover junction endodeoxyribonuclease RuvC (170 aa).

Active-site residues include Asp-9, Glu-70, and Asp-145. Residues Asp-9, Glu-70, and Asp-145 each contribute to the Mg(2+) site.

Belongs to the RuvC family. In terms of assembly, homodimer which binds Holliday junction (HJ) DNA. The HJ becomes 2-fold symmetrical on binding to RuvC with unstacked arms; it has a different conformation from HJ DNA in complex with RuvA. In the full resolvosome a probable DNA-RuvA(4)-RuvB(12)-RuvC(2) complex forms which resolves the HJ. It depends on Mg(2+) as a cofactor.

The protein localises to the cytoplasm. It catalyses the reaction Endonucleolytic cleavage at a junction such as a reciprocal single-stranded crossover between two homologous DNA duplexes (Holliday junction).. Its function is as follows. The RuvA-RuvB-RuvC complex processes Holliday junction (HJ) DNA during genetic recombination and DNA repair. Endonuclease that resolves HJ intermediates. Cleaves cruciform DNA by making single-stranded nicks across the HJ at symmetrical positions within the homologous arms, yielding a 5'-phosphate and a 3'-hydroxyl group; requires a central core of homology in the junction. The consensus cleavage sequence is 5'-(A/T)TT(C/G)-3'. Cleavage occurs on the 3'-side of the TT dinucleotide at the point of strand exchange. HJ branch migration catalyzed by RuvA-RuvB allows RuvC to scan DNA until it finds its consensus sequence, where it cleaves and resolves the cruciform DNA. The chain is Crossover junction endodeoxyribonuclease RuvC from Chlamydia trachomatis serovar A (strain ATCC VR-571B / DSM 19440 / HAR-13).